Here is a 574-residue protein sequence, read N- to C-terminus: E3 ubiquitin-protein ligase TRIM23 (574 aa).

The RING-type; degenerate zinc-finger motif lies at 31-76; sequence CGVCEDVFSLQGDKVPRLLLCGHTVCHDCLTRLPLHGRAIRCPFDR. The segment at 122–168 adopts a B box-type; degenerate zinc-finger fold; it reads ESIIRCDEDEAHLASVYCTVCATHLCSECSQVTHSTKTLAKHRRVPL. Residues 352-379 adopt a coiled-coil conformation; it reads RVVLAKQEITRLLETLQKQQQQFTEVAD. The ARF-like stretch occupies residues 390–574; the sequence is TFTKDNRVHI…LVAAGVLDVA (185 aa). GTP-binding positions include 411 to 418, 454 to 458, and 513 to 516; these read GLDGAGKT, DVGGK, and NKQD.

In the C-terminal section; belongs to the small GTPase superfamily. Arf family. In terms of assembly, homodimer. Interacts with PSCD1. Interacts with UBE2D2. Interacts with TBK1 (via N-terminal kinase domain) and p62/SQSTM1. As to quaternary structure, (Microbial infection) Interacts with human cytomegalovirus protein UL144; this interaction might cause autoubiquitination of TRAF6, leading to NF-kappa-B activation.

It localises to the cytoplasm. The protein resides in the endomembrane system. It is found in the golgi apparatus membrane. The protein localises to the lysosome membrane. It catalyses the reaction S-ubiquitinyl-[E2 ubiquitin-conjugating enzyme]-L-cysteine + [acceptor protein]-L-lysine = [E2 ubiquitin-conjugating enzyme]-L-cysteine + N(6)-ubiquitinyl-[acceptor protein]-L-lysine.. The protein operates within protein modification; protein ubiquitination. Functionally, acts as an E3 ubiquitin-protein ligase. Plays an essential role in autophagy activation during viral infection. Mechanistically, activates TANK-binding kinase 1/TBK1 by facilitating its dimerization and ability to phosphorylate the selective autophagy receptor SQSTM1. In order to achieve this function, TRIM23 mediates 'Lys-27'-linked auto-ubiquitination of its ADP-ribosylation factor (ARF) domain to induce its GTPase activity and its recruitment to autophagosomes. (Microbial infection) Mediates TRAF6 auto-ubiquitination in the presence of human cytomegalovirus protein UL144, resulting in the virally controlled activation of NF-kappa-B stimulation at early times of HCMV infection. The polypeptide is E3 ubiquitin-protein ligase TRIM23 (TRIM23) (Homo sapiens (Human)).